Reading from the N-terminus, the 647-residue chain is S-adenosyl-L-methionine-dependent tRNA 4-demethylwyosine synthase (647 aa).

Residues glycine 50–isoleucine 198 enclose the Flavodoxin-like domain. FMN is bound by residues serine 56 to threonine 60 and valine 142 to isoleucine 174. One can recognise a Radical SAM core domain in the interval tyrosine 316–glutamate 559. [4Fe-4S] cluster-binding residues include cysteine 332, cysteine 336, and cysteine 339.

The protein belongs to the TYW1 family. It depends on [4Fe-4S] cluster as a cofactor.

It catalyses the reaction N(1)-methylguanosine(37) in tRNA(Phe) + pyruvate + S-adenosyl-L-methionine = 4-demethylwyosine(37) in tRNA(Phe) + 5'-deoxyadenosine + L-methionine + CO2 + H2O. Its pathway is tRNA modification; wybutosine-tRNA(Phe) biosynthesis. In terms of biological role, probable component of the wybutosine biosynthesis pathway. Wybutosine is a hyper modified guanosine with a tricyclic base found at the 3'-position adjacent to the anticodon of eukaryotic phenylalanine tRNA. Catalyzes the condensation of N-methylguanine with 2 carbon atoms from pyruvate to form the tricyclic 4-demethylwyosine, an intermediate in wybutosine biosynthesis. This chain is S-adenosyl-L-methionine-dependent tRNA 4-demethylwyosine synthase (TYW1), found in Arabidopsis thaliana (Mouse-ear cress).